A 445-amino-acid polypeptide reads, in one-letter code: Phosphoglucosamine mutase (445 aa).

Ser101 functions as the Phosphoserine intermediate in the catalytic mechanism. Residues Ser101, Asp240, Asp242, and Asp244 each coordinate Mg(2+). At Ser101 the chain carries Phosphoserine.

Belongs to the phosphohexose mutase family. The cofactor is Mg(2+). In terms of processing, activated by phosphorylation.

The catalysed reaction is alpha-D-glucosamine 1-phosphate = D-glucosamine 6-phosphate. Functionally, catalyzes the conversion of glucosamine-6-phosphate to glucosamine-1-phosphate. The chain is Phosphoglucosamine mutase from Ectopseudomonas mendocina (strain ymp) (Pseudomonas mendocina).